A 386-amino-acid polypeptide reads, in one-letter code: 1-deoxy-D-xylulose 5-phosphate reductoisomerase (386 aa).

NADPH contacts are provided by Thr-10, Gly-11, Ser-12, Ile-13, Gly-36, Asn-38, and Asn-122. 1-deoxy-D-xylulose 5-phosphate is bound at residue Lys-123. Glu-124 provides a ligand contact to NADPH. Asp-148 serves as a coordination point for Mn(2+). 4 residues coordinate 1-deoxy-D-xylulose 5-phosphate: Ser-149, Glu-150, Ser-174, and His-197. Glu-150 is a Mn(2+) binding site. Gly-203 contributes to the NADPH binding site. Residues Ser-210, Asn-215, Lys-216, and Glu-219 each coordinate 1-deoxy-D-xylulose 5-phosphate. A Mn(2+)-binding site is contributed by Glu-219.

It belongs to the DXR family. Mg(2+) is required as a cofactor. Requires Mn(2+) as cofactor.

The enzyme catalyses 2-C-methyl-D-erythritol 4-phosphate + NADP(+) = 1-deoxy-D-xylulose 5-phosphate + NADPH + H(+). The protein operates within isoprenoid biosynthesis; isopentenyl diphosphate biosynthesis via DXP pathway; isopentenyl diphosphate from 1-deoxy-D-xylulose 5-phosphate: step 1/6. Its function is as follows. Catalyzes the NADPH-dependent rearrangement and reduction of 1-deoxy-D-xylulose-5-phosphate (DXP) to 2-C-methyl-D-erythritol 4-phosphate (MEP). This is 1-deoxy-D-xylulose 5-phosphate reductoisomerase from Geotalea uraniireducens (strain Rf4) (Geobacter uraniireducens).